The chain runs to 507 residues: MVYRKPPDGGWGWVIVIVSFFTQFLCYGSPLAVGVLYLEWLDAFGEGKGKTAWVGSLANGIGLLASPVCSICVSSFGARPVAIFSGFMVAGGLMMSSFAPNIYFLYLSYGIVVGLGCGLLYNATVTITCQYFDKRRGLALGLISTGSSVGLFIYAALQRELIELYGLDGCLLIVGALSLNILACGSLMRPLESSDSPSPEKACTDKVPDQYFVYHEKEKTVEENISILEKGYIDEKCANNVPDYKQDNILNKNVLSSINVDEKDTYKKKVVEQTNFCKQLAKRKWQLYLNYWEETVVLFKNRVFSALFFAILLFDIGGFPPSLLMEDIARSANINEEDYHMPLVSIIGIMTAIGKLILGILADFKWVNTLYLYVLTLLMMGAALLAIPFARSYFTLAVLSGILGFLTGNWSIFPYVTTKTVGIEKLTHAYGILMFFAGLGNSLGPPIVGWFYDWTQEYDTAFYFSGFCVLLGGFLLLLAALPCWNACTDRSSKLPPNTYSYKVASSA.

Residues 1-12 are Extracellular-facing; it reads MVYRKPPDGGWG. Residues 13–33 form a helical membrane-spanning segment; the sequence is WVIVIVSFFTQFLCYGSPLAV. At 34 to 52 the chain is on the cytoplasmic side; the sequence is GVLYLEWLDAFGEGKGKTA. A helical transmembrane segment spans residues 53–73; that stretch reads WVGSLANGIGLLASPVCSICV. Residues 74–79 are Extracellular-facing; it reads SSFGAR. A helical membrane pass occupies residues 80 to 100; the sequence is PVAIFSGFMVAGGLMMSSFAP. The Cytoplasmic segment spans residues 101–102; that stretch reads NI. A helical transmembrane segment spans residues 103-123; it reads YFLYLSYGIVVGLGCGLLYNA. Residues 124-136 lie on the Extracellular side of the membrane; it reads TVTITCQYFDKRR. The chain crosses the membrane as a helical span at residues 137 to 157; it reads GLALGLISTGSSVGLFIYAAL. The Cytoplasmic portion of the chain corresponds to 158–163; sequence QRELIE. The chain crosses the membrane as a helical span at residues 164 to 184; the sequence is LYGLDGCLLIVGALSLNILAC. Residues 185–302 lie on the Extracellular side of the membrane; the sequence is GSLMRPLESS…EETVVLFKNR (118 aa). The helical transmembrane segment at 303-323 threads the bilayer; it reads VFSALFFAILLFDIGGFPPSL. Topologically, residues 324–340 are cytoplasmic; sequence LMEDIARSANINEEDYH. The helical transmembrane segment at 341–361 threads the bilayer; it reads MPLVSIIGIMTAIGKLILGIL. Topologically, residues 362–369 are extracellular; that stretch reads ADFKWVNT. The chain crosses the membrane as a helical span at residues 370 to 390; it reads LYLYVLTLLMMGAALLAIPFA. The Cytoplasmic portion of the chain corresponds to 391-395; that stretch reads RSYFT. Residues 396–416 traverse the membrane as a helical segment; sequence LAVLSGILGFLTGNWSIFPYV. The Extracellular segment spans residues 417–430; sequence TTKTVGIEKLTHAY. A helical transmembrane segment spans residues 431–451; that stretch reads GILMFFAGLGNSLGPPIVGWF. The Cytoplasmic portion of the chain corresponds to 452 to 460; sequence YDWTQEYDT. The chain crosses the membrane as a helical span at residues 461 to 481; that stretch reads AFYFSGFCVLLGGFLLLLAAL. At 482 to 507 the chain is on the extracellular side; it reads PCWNACTDRSSKLPPNTYSYKVASSA.

It belongs to the major facilitator superfamily. Monocarboxylate porter (TC 2.A.1.13) family.

The protein localises to the cell membrane. It catalyses the reaction creatine(in) = creatine(out). The enzyme catalyses (R)-carnitine(in) = (R)-carnitine(out). In terms of biological role, extracellular pH-and Na(+)-sensitive low-affinity creatine transporter. Also functions as a pH-independent carnitine efflux transporter. The polypeptide is Monocarboxylate transporter 9 (SLC16A9) (Gallus gallus (Chicken)).